The chain runs to 71 residues: UPF0346 protein Bcer98_1690 (71 aa).

Belongs to the UPF0346 family.

The sequence is that of UPF0346 protein Bcer98_1690 from Bacillus cytotoxicus (strain DSM 22905 / CIP 110041 / 391-98 / NVH 391-98).